The sequence spans 442 residues: Amino-acid acetyltransferase (442 aa).

One can recognise an N-acetyltransferase domain in the interval 295 to 442; the sequence is EQARAATIED…RSKVLSKTIS (148 aa).

Belongs to the acetyltransferase family. ArgA subfamily.

The protein resides in the cytoplasm. The catalysed reaction is L-glutamate + acetyl-CoA = N-acetyl-L-glutamate + CoA + H(+). Its pathway is amino-acid biosynthesis; L-arginine biosynthesis; N(2)-acetyl-L-ornithine from L-glutamate: step 1/4. This chain is Amino-acid acetyltransferase, found in Aeromonas salmonicida (strain A449).